Consider the following 178-residue polypeptide: ATP-dependent protease subunit HslV (178 aa).

T7 is a catalytic residue. Residues G162, C165, and T168 each contribute to the Na(+) site.

The protein belongs to the peptidase T1B family. HslV subfamily. A double ring-shaped homohexamer of HslV is capped on each side by a ring-shaped HslU homohexamer. The assembly of the HslU/HslV complex is dependent on binding of ATP.

It is found in the cytoplasm. The catalysed reaction is ATP-dependent cleavage of peptide bonds with broad specificity.. With respect to regulation, allosterically activated by HslU binding. Functionally, protease subunit of a proteasome-like degradation complex believed to be a general protein degrading machinery. The protein is ATP-dependent protease subunit HslV of Burkholderia ambifaria (strain ATCC BAA-244 / DSM 16087 / CCUG 44356 / LMG 19182 / AMMD) (Burkholderia cepacia (strain AMMD)).